The chain runs to 86 residues: Cell division topological specificity factor (86 aa).

This sequence belongs to the MinE family.

Functionally, prevents the cell division inhibition by proteins MinC and MinD at internal division sites while permitting inhibition at polar sites. This ensures cell division at the proper site by restricting the formation of a division septum at the midpoint of the long axis of the cell. The sequence is that of Cell division topological specificity factor from Rhizobium etli (strain ATCC 51251 / DSM 11541 / JCM 21823 / NBRC 15573 / CFN 42).